A 193-amino-acid polypeptide reads, in one-letter code: Phosphoheptose isomerase (193 aa).

Residues 37-193 (LADSFKAGGK…QLIEKEMVKA (157 aa)) form the SIS domain. 52 to 54 (NGG) contacts substrate. Zn(2+)-binding residues include histidine 61 and glutamate 65. Substrate is bound by residues glutamate 65, 93-94 (ND), 119-121 (STS), serine 124, and glutamine 172. 2 residues coordinate Zn(2+): glutamine 172 and histidine 180.

The protein belongs to the SIS family. GmhA subfamily. As to quaternary structure, homotetramer. Zn(2+) is required as a cofactor.

Its subcellular location is the cytoplasm. The enzyme catalyses 2 D-sedoheptulose 7-phosphate = D-glycero-alpha-D-manno-heptose 7-phosphate + D-glycero-beta-D-manno-heptose 7-phosphate. It functions in the pathway carbohydrate biosynthesis; D-glycero-D-manno-heptose 7-phosphate biosynthesis; D-glycero-alpha-D-manno-heptose 7-phosphate and D-glycero-beta-D-manno-heptose 7-phosphate from sedoheptulose 7-phosphate: step 1/1. Functionally, catalyzes the isomerization of sedoheptulose 7-phosphate in D-glycero-D-manno-heptose 7-phosphate. The chain is Phosphoheptose isomerase from Serratia proteamaculans (strain 568).